A 501-amino-acid polypeptide reads, in one-letter code: Endosomal/lysosomal proton channel TMEM175 (501 aa).

The tract at residues M1–L20 is disordered. Topologically, residues M1–S31 are cytoplasmic. A helical transmembrane segment spans residues H32–A54. Residues R33–D39 carry the RxxxFSD motif 1 motif. The Lumenal segment spans residues H55–K75. A short helix H1-1 region spans residues T56–D61. A short helix H2-1 region spans residues K63–Q69. Residues I76–Q98 traverse the membrane as a helical segment. At V99–D104 the chain is on the cytoplasmic side. Residues D105 to S126 form a helical membrane-spanning segment. Over L127 to F136 the chain is Lumenal. The helical transmembrane segment at G137–Y158 threads the bilayer. Residues G159–H182 lie on the Cytoplasmic side of the membrane. Residues I183–F203 form a helical membrane-spanning segment. Residues F204–S208 are Lumenal-facing. Residues Y209 to C228 traverse the membrane as a helical segment. The Cytoplasmic segment spans residues K229–S257. A helical transmembrane segment spans residues K258–E282. The short motif at R260–D266 is the RxxxFSD motif 2 element. Residues D283–N309 are Lumenal-facing. Positions P288 to H296 are short helix H1-2. The segment at S298–S304 is short helix H2-2. The chain crosses the membrane as a helical span at residues Y310–L332. Residues Y333–T338 are Cytoplasmic-facing. Residues R339–Q360 form a helical membrane-spanning segment. At L361 to A375 the chain is on the lumenal side. A helical membrane pass occupies residues I376–T396. Residues A397 to H416 lie on the Cytoplasmic side of the membrane. A helical membrane pass occupies residues A417 to L440. Residues S441–E442 are Lumenal-facing. A helical transmembrane segment spans residues F443 to S469. Topologically, residues L470–S501 are cytoplasmic.

This sequence belongs to the TMEM175 family. Homodimer.

Its subcellular location is the endosome membrane. It localises to the lysosome membrane. It catalyses the reaction H(+)(in) = H(+)(out). The enzyme catalyses K(+)(in) = K(+)(out). With respect to regulation, active at low pH (under pH 4.6): proton channel activity is activated by luminal side protons. Polyunsaturated fatty acids, such as arachidonic acid, also activate the channel activity. Its function is as follows. Proton-activated proton channel that catalyzes proton efflux from endosomes and lysosomes to maintain a steady-state pH. Activated at low pH (under pH 4.6) by luminal side protons: selectively mediates lysosomal proton release from lysosomes, eliciting a proton leak that balances V-ATPase activity to maintain pH homeostasis. Regulation of lumenal pH stability is required for autophagosome-lysosome fusion. Also acts as a potassium channel at higher pH, regulating potassium conductance in endosomes and lysosomes. This chain is Endosomal/lysosomal proton channel TMEM175, found in Gallus gallus (Chicken).